The following is a 389-amino-acid chain: Flagellar P-ring protein (389 aa).

The N-terminal stretch at 1-33 (MRPLVAARRRAAACCALAACMLALAFAPAAARA) is a signal peptide.

The protein belongs to the FlgI family. In terms of assembly, the basal body constitutes a major portion of the flagellar organelle and consists of four rings (L,P,S, and M) mounted on a central rod.

It localises to the periplasm. The protein localises to the bacterial flagellum basal body. In terms of biological role, assembles around the rod to form the L-ring and probably protects the motor/basal body from shearing forces during rotation. In Burkholderia pseudomallei (strain K96243), this protein is Flagellar P-ring protein.